The primary structure comprises 158 residues: Small ribosomal subunit protein uS7 (158 aa).

Belongs to the universal ribosomal protein uS7 family. Part of the 30S ribosomal subunit. Contacts proteins S9 and S11.

Functionally, one of the primary rRNA binding proteins, it binds directly to 16S rRNA where it nucleates assembly of the head domain of the 30S subunit. Is located at the subunit interface close to the decoding center, probably blocks exit of the E-site tRNA. The chain is Small ribosomal subunit protein uS7 from Bacteroides fragilis (strain YCH46).